Reading from the N-terminus, the 160-residue chain is Keratin-associated protein 13-4 (160 aa).

Repeat copies occupy residues 41–50, 51–60, 61–70, and 77–86. The tract at residues 41-86 is 4 X 10 AA approximate repeats; sequence CQLRSSLYRDCQKTCWEPASCQKSCYRPRTSILCCPCQTTCSGSLG.

It belongs to the PMG family. As to quaternary structure, interacts with hair keratins.

In the hair cortex, hair keratin intermediate filaments are embedded in an interfilamentous matrix, consisting of hair keratin-associated proteins (KRTAP), which are essential for the formation of a rigid and resistant hair shaft through their extensive disulfide bond cross-linking with abundant cysteine residues of hair keratins. The matrix proteins include the high-sulfur and high-glycine-tyrosine keratins. In Homo sapiens (Human), this protein is Keratin-associated protein 13-4 (KRTAP13-4).